A 342-amino-acid polypeptide reads, in one-letter code: Elongation factor Ts (342 aa).

Residues 79–82 (TDFV) are involved in Mg(2+) ion dislocation from EF-Tu.

This sequence belongs to the EF-Ts family.

Its subcellular location is the cytoplasm. Associates with the EF-Tu.GDP complex and induces the exchange of GDP to GTP. It remains bound to the aminoacyl-tRNA.EF-Tu.GTP complex up to the GTP hydrolysis stage on the ribosome. This is Elongation factor Ts from Lactococcus lactis subsp. cremoris (strain MG1363).